The primary structure comprises 179 residues: Ubiquitin-conjugating enzyme E2 C (179 aa).

Residues 1–31 (MASQNRDPVAASVAAARKGAEPSGGAARGPV) form a disordered region. Ala-2 carries the post-translational modification N-acetylalanine. A Phosphoserine modification is found at Ser-3. Residues 30–175 (PVGKRLQQEL…LQETYSKQVS (146 aa)) form the UBC core domain. Catalysis depends on Cys-114, which acts as the Glycyl thioester intermediate.

This sequence belongs to the ubiquitin-conjugating enzyme family. In terms of assembly, component of the APC/C complex, composed of at least 14 distinct subunits that assemble into a complex of at least 19 chains with a combined molecular mass of around 1.2 MDa. Within this complex, directly interacts with ANAPC2. Post-translationally, autoubiquitinated by the APC/C complex, leading to its degradation by the proteasome. Its degradation plays a central role in APC/C regulation, allowing cyclin-A accumulation before S phase entry. APC/C substrates inhibit the autoubiquitination of UBE2C/UBCH10 but not its E2 function, hence APC/C remaining active until its substrates have been destroyed.

It catalyses the reaction S-ubiquitinyl-[E1 ubiquitin-activating enzyme]-L-cysteine + [E2 ubiquitin-conjugating enzyme]-L-cysteine = [E1 ubiquitin-activating enzyme]-L-cysteine + S-ubiquitinyl-[E2 ubiquitin-conjugating enzyme]-L-cysteine.. The enzyme catalyses S-ubiquitinyl-[E1 ubiquitin-activating enzyme]-L-cysteine + [acceptor protein]-L-lysine = [E1 ubiquitin-activating enzyme]-L-cysteine + N(6)-monoubiquitinyl-[acceptor protein]-L-lysine.. Its pathway is protein modification; protein ubiquitination. In terms of biological role, accepts ubiquitin from the E1 complex and catalyzes its covalent attachment to other proteins. In vitro catalyzes 'Lys-11'- and 'Lys-48'-linked polyubiquitination. Acts as an essential factor of the anaphase promoting complex/cyclosome (APC/C), a cell cycle-regulated ubiquitin ligase that controls progression through mitosis. Acts by initiating 'Lys-11'-linked polyubiquitin chains on APC/C substrates, leading to the degradation of APC/C substrates by the proteasome and promoting mitotic exit. The protein is Ubiquitin-conjugating enzyme E2 C (UBE2C) of Bos taurus (Bovine).